The primary structure comprises 247 residues: 2,3-bisphosphoglycerate-dependent phosphoglycerate mutase (247 aa).

Residues arginine 8 to asparagine 15, threonine 21 to glycine 22, arginine 60, glutamate 87 to tyrosine 90, lysine 98, arginine 114 to arginine 115, and glycine 183 to asparagine 184 contribute to the substrate site. Catalysis depends on histidine 9, which acts as the Tele-phosphohistidine intermediate. Catalysis depends on glutamate 87, which acts as the Proton donor/acceptor.

Belongs to the phosphoglycerate mutase family. BPG-dependent PGAM subfamily. In terms of assembly, homodimer.

The catalysed reaction is (2R)-2-phosphoglycerate = (2R)-3-phosphoglycerate. It functions in the pathway carbohydrate degradation; glycolysis; pyruvate from D-glyceraldehyde 3-phosphate: step 3/5. Functionally, catalyzes the interconversion of 2-phosphoglycerate and 3-phosphoglycerate. The polypeptide is 2,3-bisphosphoglycerate-dependent phosphoglycerate mutase (Geobacter metallireducens (strain ATCC 53774 / DSM 7210 / GS-15)).